The primary structure comprises 172 residues: Stellate protein CG33247 (172 aa).

This sequence belongs to the casein kinase 2 subunit beta family. Interacts in vitro with the casein kinase 2 alpha subunit (CkII-alpha). The relevance of such interaction is however unclear in vivo. In terms of tissue distribution, probably not expressed in wild-type flies. In males lacking the Y chromosome, it is testis-specific and constitutes the main component of star-shaped crystals.

Functionally, unknown. In males lacking the Y chromosome, its strong overexpression leads to the appearance of proteinaceous star-shaped crystals in the primary spermatocytes causing meiotic drive, possibly by interfering with normal casein kinase 2 activity. The protein is Stellate protein CG33247 (Ste:CG33247) of Drosophila melanogaster (Fruit fly).